The following is a 588-amino-acid chain: Mediator of RNA polymerase II transcription subunit 26 (588 aa).

In terms of domain architecture, TFIIS N-terminal spans 10–87; sequence QMRDRLLQAI…RSWQKLIEPV (78 aa). 2 disordered regions span residues 112–393 and 412–441; these read RPEM…YTVN and KLTFDPMTRQIRPLTQKEPVRADSPVPTEQ. Residues 123-133 show a composition bias toward basic and acidic residues; that stretch reads SIHDLKNRNDI. Residues 179 to 191 are compositionally biased toward polar residues; that stretch reads PLPTNGISGSPES. Positions 207–218 are enriched in basic and acidic residues; the sequence is SRLEPSDNEKHS. Positions 314-325 are enriched in pro residues; it reads SPLPLAQPPTPP. Phosphoserine occurs at positions 435 and 458.

The protein belongs to the Mediator complex subunit 26 family. As to quaternary structure, component of the Mediator complex, which is composed of MED1, MED4, MED6, MED7, MED8, MED9, MED10, MED11, MED12, MED13, MED13L, MED14, MED15, MED16, MED17, MED18, MED19, MED20, MED21, MED22, MED23, MED24, MED25, MED26, MED27, MED29, MED30, MED31, CCNC, CDK8 and CDC2L6/CDK11. The MED12, MED13, CCNC and CDK8 subunits form a distinct module termed the CDK8 module. Mediator containing the CDK8 module is less active than Mediator lacking this module in supporting transcriptional activation. Individual preparations of the Mediator complex lacking one or more distinct subunits have been variously termed ARC, CRSP, DRIP, PC2, SMCC and TRAP. Interacts with CEBPB (when not methylated).

It is found in the nucleus. Its function is as follows. Component of the Mediator complex, a coactivator involved in the regulated transcription of nearly all RNA polymerase II-dependent genes. Mediator functions as a bridge to convey information from gene-specific regulatory proteins to the basal RNA polymerase II transcription machinery. Mediator is recruited to promoters by direct interactions with regulatory proteins and serves as a scaffold for the assembly of a functional pre-initiation complex with RNA polymerase II and the general transcription factors. The polypeptide is Mediator of RNA polymerase II transcription subunit 26 (Med26) (Mus musculus (Mouse)).